An 84-amino-acid chain; its full sequence is Exodeoxyribonuclease 7 small subunit (84 aa).

It belongs to the XseB family. As to quaternary structure, heterooligomer composed of large and small subunits.

It is found in the cytoplasm. It catalyses the reaction Exonucleolytic cleavage in either 5'- to 3'- or 3'- to 5'-direction to yield nucleoside 5'-phosphates.. Functionally, bidirectionally degrades single-stranded DNA into large acid-insoluble oligonucleotides, which are then degraded further into small acid-soluble oligonucleotides. The protein is Exodeoxyribonuclease 7 small subunit of Bartonella bacilliformis (strain ATCC 35685 / KC583 / Herrer 020/F12,63).